The sequence spans 490 residues: Sushi domain-containing protein 4 (490 aa).

Residues 1–20 form a disordered region; sequence MYHGMNPSNGDGFLEQQLQQ. An N-terminal signal peptide occupies residues 1–41; that stretch reads MYHGMNPSNGDGFLEQQLQQQQPQSPQRLLAVILWFQLALC. Topologically, residues 42 to 319 are extracellular; that stretch reads FGPAQLTGGF…PSTHETLLTT (278 aa). Sushi domains are found at residues 55–119, 120–179, 178–239, and 241–304; these read NVCA…VCIQ, EDCR…ICQG, QGCL…RCLA, and EVCP…YCIK. 8 disulfide bridges follow: Cys-57–Cys-99, Cys-85–Cys-117, Cys-122–Cys-165, Cys-147–Cys-177, Cys-180–Cys-224, Cys-210–Cys-237, Cys-243–Cys-289, and Cys-274–Cys-302. N-linked (GlcNAc...) asparagine glycans are attached at residues Asn-104 and Asn-134. A glycan (N-linked (GlcNAc...) asparagine) is linked at Asn-192. The chain crosses the membrane as a helical span at residues 320–340; it reads WKIVAFTATSVLLVLLLVILA. Residues 341-490 lie on the Cytoplasmic side of the membrane; the sequence is RMFQTKFKAH…DEIPLMEEDP (150 aa). The segment at 394–490 is disordered; that stretch reads YPASVGQGCP…DEIPLMEEDP (97 aa). Composition is skewed to polar residues over residues 430–444 and 461–475; these read CDST…QSLY and DTIS…STSP. The span at 479–490 shows a compositional bias: acidic residues; that stretch reads IADEIPLMEEDP.

High expression in brain and eye, with weaker expression in spinal cord and testis. Detected in white matter of brain and in the outer segments of photoreceptors.

The protein localises to the membrane. Its function is as follows. Acts as a complement inhibitor by disrupting the formation of the classical C3 convertase. Isoform 3 inhibits the classical complement pathway, while membrane-bound isoform 1 inhibits deposition of C3b via both the classical and alternative complement pathways. The sequence is that of Sushi domain-containing protein 4 (Susd4) from Mus musculus (Mouse).